A 370-amino-acid chain; its full sequence is Ubiquitin-binding protein Rv1468c (370 aa).

Residues 1–72 (MSFVVANTEF…QVLSAQAAAF (72 aa)) form a UBA region. Residues 1–93 (MSFVVANTEF…AQAYAAAEAT (93 aa)) form the PE domain.

This sequence belongs to the mycobacterial PE family. PGRS subfamily. As to quaternary structure, interacts directly with host polyubiquitin in a UBA-dependent manner.

It localises to the secreted. It is found in the cell wall. Its subcellular location is the cell surface. Its function is as follows. Mediates direct binding of host ubiquitin (Ub) to the mycobacterial surface, which triggers host xenophagy. Interaction between Rv1468c and ubiquitin recruits autophagy receptor p62 to deliver mycobacteria into LC3-associated autophagosomes. It could be a viable evolutionary strategy adopted by M.tuberculosis to maintain long-term intracellular survival through self-controlling its intracellular bacterial loads to avoid excessive host inflammatory immune responses. The sequence is that of Ubiquitin-binding protein Rv1468c from Mycobacterium tuberculosis (strain ATCC 25618 / H37Rv).